Here is a 233-residue protein sequence, read N- to C-terminus: 7-cyano-7-deazaguanine synthase (233 aa).

17 to 27 contacts ATP; that stretch reads LSGGLDSMVCA. Zn(2+)-binding residues include Cys196, Cys206, Cys209, and Cys212.

Belongs to the QueC family. Zn(2+) is required as a cofactor.

The enzyme catalyses 7-carboxy-7-deazaguanine + NH4(+) + ATP = 7-cyano-7-deazaguanine + ADP + phosphate + H2O + H(+). Its pathway is purine metabolism; 7-cyano-7-deazaguanine biosynthesis. In terms of biological role, catalyzes the ATP-dependent conversion of 7-carboxy-7-deazaguanine (CDG) to 7-cyano-7-deazaguanine (preQ(0)). In Novosphingobium aromaticivorans (strain ATCC 700278 / DSM 12444 / CCUG 56034 / CIP 105152 / NBRC 16084 / F199), this protein is 7-cyano-7-deazaguanine synthase.